The chain runs to 216 residues: Pyrophosphatase PpaX (216 aa).

D9 (nucleophile) is an active-site residue.

The protein belongs to the HAD-like hydrolase superfamily. PpaX family. It depends on Mg(2+) as a cofactor.

The enzyme catalyses diphosphate + H2O = 2 phosphate + H(+). Functionally, hydrolyzes pyrophosphate formed during P-Ser-HPr dephosphorylation by HPrK/P. Might play a role in controlling the intracellular pyrophosphate pool. This is Pyrophosphatase PpaX from Bacillus cereus (strain Q1).